The sequence spans 267 residues: Strigolactone esterase D14 (267 aa).

Serine 97 acts as the Nucleophile in catalysis. Residues aspartate 218 and histidine 247 contribute to the active site.

It belongs to the AB hydrolase superfamily. Interacts with SMXL6, SMXL7 and SMXL8. The interaction with SMXLs occurs in the presence of (2'R) stereoisomers of strigolactones, but not (2'S) stereoisomers. Interacts with MAX2. Forms a complex with MAX2 and SKP1A/ASK1 in presence of strigolactone. As to expression, expressed at high levels in rosette and cauline leaves and at lower levels in axillary buds, inflorescences, stems, roots and developing vascular tissue of cotyledons.

Its subcellular location is the cytoplasm. The protein resides in the nucleus. In terms of biological role, involved in strigolactone signaling pathway. Does not move long distances acropetally in the plant to regulate shoot branching and is rapidly degraded in the presence of strigolactones. Functions downstream of strigolactone synthesis, as a component of hormone signaling and as an enzyme that participates in the conversion of strigolactones to the bioactive form. Acts probably as a strigolactone receptor. Strigolactones are hormones that inhibit tillering and shoot branching through the MAX-dependent pathway, contribute to the regulation of shoot architectural response to phosphate-limiting conditions and function as rhizosphere signal that stimulates hyphal branching of arbuscular mycorrhizal fungi and trigger seed germination of root parasitic weeds. Hydrolyzes methyl carlactonoate (MeCLA), but not carlactone (CL) or carlactonoic acid (CLA). Hydrolyzes the butenolide ring of strigolactones. The initial nucleophilic attack causes an electron shift, followed by the addition of a water molecule, to lead to the release of the ABC ring product and the formation of a 'Ser-97'-stabilized open lactone intermediate. Has no esterase activity for 4-nitrophenyl butyrate. Binds and hydrolyzes the synthetic strigolactone analog GR24 in vitro. Forms a stable covalent complex with the D-ring of strigolactone, which is essential for hormone bioactivity. The D-ring is attached to His-247 of the catalytic triad. The hydrolysis of strigolactone into a covalently linked intermediate molecule initiates a conformational change of D14 to facilitate interaction with MAX2 and formation of the D14-MAX2-SKP1/ASK1 complex to trigger strigolactone signaling. This mechanism defines D14 as a non-canonical hormone receptor with dual functions to generate and sense the active form of strigolactone. This is Strigolactone esterase D14 from Arabidopsis thaliana (Mouse-ear cress).